The primary structure comprises 616 residues: Dihydroxy-acid dehydratase (616 aa).

Asp81 is a binding site for Mg(2+). Residue Cys122 participates in [2Fe-2S] cluster binding. The Mg(2+) site is built by Asp123 and Lys124. Lys124 is subject to N6-carboxylysine. Cys195 lines the [2Fe-2S] cluster pocket. A Mg(2+)-binding site is contributed by Glu491. The active-site Proton acceptor is Ser517.

Belongs to the IlvD/Edd family. Homodimer. [2Fe-2S] cluster serves as cofactor. It depends on Mg(2+) as a cofactor.

The enzyme catalyses (2R)-2,3-dihydroxy-3-methylbutanoate = 3-methyl-2-oxobutanoate + H2O. It catalyses the reaction (2R,3R)-2,3-dihydroxy-3-methylpentanoate = (S)-3-methyl-2-oxopentanoate + H2O. It functions in the pathway amino-acid biosynthesis; L-isoleucine biosynthesis; L-isoleucine from 2-oxobutanoate: step 3/4. It participates in amino-acid biosynthesis; L-valine biosynthesis; L-valine from pyruvate: step 3/4. Functions in the biosynthesis of branched-chain amino acids. Catalyzes the dehydration of (2R,3R)-2,3-dihydroxy-3-methylpentanoate (2,3-dihydroxy-3-methylvalerate) into 2-oxo-3-methylpentanoate (2-oxo-3-methylvalerate) and of (2R)-2,3-dihydroxy-3-methylbutanoate (2,3-dihydroxyisovalerate) into 2-oxo-3-methylbutanoate (2-oxoisovalerate), the penultimate precursor to L-isoleucine and L-valine, respectively. This is Dihydroxy-acid dehydratase from Serratia proteamaculans (strain 568).